A 101-amino-acid chain; its full sequence is DNA-binding protein Fis (101 aa).

Residues 77-96 constitute a DNA-binding region (H-T-H motif); that stretch reads QTRAANMLGINRGTLRKKLK.

Belongs to the transcriptional regulatory Fis family. As to quaternary structure, homodimer.

Its function is as follows. Activates ribosomal RNA transcription. Plays a direct role in upstream activation of rRNA promoters. The protein is DNA-binding protein Fis of Shewanella denitrificans (strain OS217 / ATCC BAA-1090 / DSM 15013).